Here is a 66-residue protein sequence, read N- to C-terminus: Large ribosomal subunit protein uL29 (66 aa).

This sequence belongs to the universal ribosomal protein uL29 family.

This Mesorhizobium japonicum (strain LMG 29417 / CECT 9101 / MAFF 303099) (Mesorhizobium loti (strain MAFF 303099)) protein is Large ribosomal subunit protein uL29.